We begin with the raw amino-acid sequence, 60 residues long: Large ribosomal subunit protein bL32 (60 aa).

Belongs to the bacterial ribosomal protein bL32 family.

The polypeptide is Large ribosomal subunit protein bL32 (Streptococcus suis (strain 05ZYH33)).